The sequence spans 178 residues: Inorganic pyrophosphatase (178 aa).

Substrate-binding residues include K30, R44, and Y56. The Mg(2+) site is built by D66, D71, and D103. Residue Y142 participates in substrate binding.

This sequence belongs to the PPase family. Homohexamer. Mg(2+) serves as cofactor.

The protein localises to the cytoplasm. The enzyme catalyses diphosphate + H2O = 2 phosphate + H(+). In terms of biological role, catalyzes the hydrolysis of inorganic pyrophosphate (PPi) forming two phosphate ions. The protein is Inorganic pyrophosphatase of Bradyrhizobium diazoefficiens (strain JCM 10833 / BCRC 13528 / IAM 13628 / NBRC 14792 / USDA 110).